Here is a 185-residue protein sequence, read N- to C-terminus: Probable chorismate pyruvate-lyase 1 (185 aa).

Residues Arg68, Leu106, and Glu164 each coordinate substrate.

Belongs to the UbiC family.

The protein localises to the cytoplasm. It catalyses the reaction chorismate = 4-hydroxybenzoate + pyruvate. Its pathway is cofactor biosynthesis; ubiquinone biosynthesis. Removes the pyruvyl group from chorismate, with concomitant aromatization of the ring, to provide 4-hydroxybenzoate (4HB) for the ubiquinone pathway. This chain is Probable chorismate pyruvate-lyase 1, found in Pseudomonas entomophila (strain L48).